Consider the following 131-residue polypeptide: Small ribosomal subunit protein uS8 (131 aa).

The protein belongs to the universal ribosomal protein uS8 family. Part of the 30S ribosomal subunit. Contacts proteins S5 and S12.

In terms of biological role, one of the primary rRNA binding proteins, it binds directly to 16S rRNA central domain where it helps coordinate assembly of the platform of the 30S subunit. This Dechloromonas aromatica (strain RCB) protein is Small ribosomal subunit protein uS8.